The chain runs to 407 residues: Probable tRNA sulfurtransferase (407 aa).

In terms of domain architecture, THUMP spans 61–165 (NEITYRLSKI…LDAIYMYEEV (105 aa)). ATP-binding positions include 183–184 (ML), 208–209 (HF), Arg-265, Gly-287, and Gln-296.

Belongs to the ThiI family.

The protein resides in the cytoplasm. The enzyme catalyses [ThiI sulfur-carrier protein]-S-sulfanyl-L-cysteine + a uridine in tRNA + 2 reduced [2Fe-2S]-[ferredoxin] + ATP + H(+) = [ThiI sulfur-carrier protein]-L-cysteine + a 4-thiouridine in tRNA + 2 oxidized [2Fe-2S]-[ferredoxin] + AMP + diphosphate. It catalyses the reaction [ThiS sulfur-carrier protein]-C-terminal Gly-Gly-AMP + S-sulfanyl-L-cysteinyl-[cysteine desulfurase] + AH2 = [ThiS sulfur-carrier protein]-C-terminal-Gly-aminoethanethioate + L-cysteinyl-[cysteine desulfurase] + A + AMP + 2 H(+). It participates in cofactor biosynthesis; thiamine diphosphate biosynthesis. In terms of biological role, catalyzes the ATP-dependent transfer of a sulfur to tRNA to produce 4-thiouridine in position 8 of tRNAs, which functions as a near-UV photosensor. Also catalyzes the transfer of sulfur to the sulfur carrier protein ThiS, forming ThiS-thiocarboxylate. This is a step in the synthesis of thiazole, in the thiamine biosynthesis pathway. The sulfur is donated as persulfide by IscS. The chain is Probable tRNA sulfurtransferase from Staphylococcus aureus (strain MSSA476).